Reading from the N-terminus, the 1305-residue chain is MNKIYALKYCHATGGLIAVSELASRVMKKAARGSLLALFNLSLYGAFLSASQAAQLNIDNVWARDYLDLAQNKGVFKAGATNVSIQLKNGQTFNFPNVPIPDFSPASNKGATTSIGGAYSVTATHNGTTHHAISTQNWGQSSYKYIDRMTNGDFAVTRLDKFVVETTGVKNSVDFSLNSHDALERYGVEINGEKKIIGFRVGAGTTYTVQNGNTYSTGQVYNPLLLSASMFQLNWDNKRPYNNTTPFYNETTGGDSGSGFYLYDNVKKEWVMLGTLFGIASSGADVWSILNQYDENTVNGLKNKFTQKVQLNNNTMSLNSDSFTLAGNNTAVEKNNNNYKDLSFSGGGSINFDNDVNIGSGGLIFDAGHHYTVTGNNKTFKGAGLDIGDNTTVDWNVKGVVGDNLHKIGAGTLNVNVSQGNNLKTGDGLVVLNSANAFDNIYMASGHGVVKINHSAALNQNNDYRGIFFTENGGTLDLNGYDQSFNKIAATDIGALITNSAVQKAVLSVNNQSNYMYHGSVSGNTEINHQFDTQKNNSRLILDGNVDITNDINIKNSQLTMQGHATSHAVFREGGVTCMLPGVICEKDYVSGIQQQENSANKNNNTDYKTNNQVSSFEQPDWENRLFKFKTLNLINSDFIVGRNAIVVGDISANNSTLSLSGKDTKVHIDMYDGKNITGDGFGFRQDIKDGVSVSPESSSYFGNVTLNNHSLLDIGNKFTGGIEAYDSSVSVTSQNAVFDRVGSFVNSSLTLEKGAKLTAQGGIFSTGAVDVKENASLILTGTPSAQKQEYYSPVISTTEGINLGDKASLSVKNMGYLSSDIHAGTTAATINLGDGDAETDSPLFSSLMKGYNAVLSGNITGEQSTVNMNNALWYSDGNSTIGTLKSTGGRVELGGGKDFATLRVKELNANNATFLMHTNNSQADQLNVTNKLLGSNNTVLVDFLNKPASEMNVTLITAPKGSDEKTFTAGTQQIGFSNVTPVISTEKTDDATKWMLTGYQTVSDAGASKTATDFMASGYKSFLTEVNNLNKRMGDLRDTQGDAGVWARIMNGTGSADGGYSDNYTHVQIGADRKHELDGVDLFTGALLTYTDSNASSHAFSGKTKSVGGGLYASALFDSGAYFDLIGKYLHHDNQYTASFASLGTKDYSSHSWYAGAEVGYRYHLSEESWVEPQMELVYGSVSGKSFSWEDRGMALSMKDKDYNPLIGRTGVDVGRTFSGDDWKITARAGLGYQFDLLANGETVLRDASGEKRFEGEKDSRMLMNVGMNAEIKDNMRFGLELEKSAFGKYNVDNAINANFRYSF.

The N-terminal stretch at 1 to 53 (MNKIYALKYCHATGGLIAVSELASRVMKKAARGSLLALFNLSLYGAFLSASQA) is a signal peptide. The Peptidase S6 domain occupies 55-297 (QLNIDNVWAR…SILNQYDENT (243 aa)). Catalysis depends on charge relay system residues His125, Asp153, and Ser256. The Autotransporter domain maps to 1039–1305 (DTQGDAGVWA…AINANFRYSF (267 aa)).

Post-translationally, cleaved to release the mature protein from the outer membrane.

Its subcellular location is the periplasm. The protein localises to the secreted. It is found in the cell surface. The protein resides in the cell outer membrane. Inhibition of cytotoxic activity by phenylmethylsulfonyl fluoride. Functionally, serine protease with enterotoxic and cytotoxic activities. Cleaves fodrin, but does not cause its redistribution within epithelial cells. The exact role of EspC in EPEC pathogenesis is still unknown. This Escherichia coli O127:H6 (strain E2348/69 / EPEC) protein is Serine protease EspC (espC).